A 222-amino-acid chain; its full sequence is Phosphoenolpyruvate guanylyltransferase (222 aa).

Phosphoenolpyruvate contacts are provided by Thr147, Gly163, and Ser166.

It belongs to the CofC family.

It catalyses the reaction phosphoenolpyruvate + GTP + H(+) = enolpyruvoyl-2-diphospho-5'-guanosine + diphosphate. The protein operates within cofactor biosynthesis; coenzyme F420 biosynthesis. Functionally, guanylyltransferase that catalyzes the activation of phosphoenolpyruvate (PEP) as enolpyruvoyl-2-diphospho-5'-guanosine, via the condensation of PEP with GTP. It is involved in the biosynthesis of coenzyme F420, a hydride carrier cofactor. The chain is Phosphoenolpyruvate guanylyltransferase from Streptosporangium roseum (strain ATCC 12428 / DSM 43021 / JCM 3005 / KCTC 9067 / NCIMB 10171 / NRRL 2505 / NI 9100).